Consider the following 496-residue polypeptide: Cytochrome P450 3A56 (496 aa).

Cys-441 provides a ligand contact to heme.

The protein belongs to the cytochrome P450 family. Requires heme as cofactor. In terms of tissue distribution, highly expressed in liver and intestine. Moderate expression in gill and spleen. Low expression in kidney, brain and heart.

The protein resides in the endoplasmic reticulum membrane. Its subcellular location is the microsome membrane. It carries out the reaction an organic molecule + reduced [NADPH--hemoprotein reductase] + O2 = an alcohol + oxidized [NADPH--hemoprotein reductase] + H2O + H(+). Putative steroid 6-beta-hydroxylase. The protein is Cytochrome P450 3A56 (cyp3a56) of Fundulus heteroclitus (Killifish).